Consider the following 377-residue polypeptide: Probable O-methyltransferase 3 (377 aa).

D241 contacts S-adenosyl-L-methionine. Catalysis depends on H279, which acts as the Proton acceptor.

This sequence belongs to the class I-like SAM-binding methyltransferase superfamily. Cation-independent O-methyltransferase family. In terms of tissue distribution, highly expressed in lupulin glands. Detected in early-, mid- and late-stage cones.

This chain is Probable O-methyltransferase 3, found in Humulus lupulus (European hop).